The chain runs to 115 residues: Histone H2A-Bbd type 1 (115 aa).

The interval 1–21 (MPRRRRRRGSSGAGGRGRTCS) is disordered. The segment at 87 to 115 (LLDMVVHNDRLLSTLFNTTTISQVAPGED) is docking domain.

The protein belongs to the histone H2A family. In terms of assembly, the nucleosome is a histone octamer containing two molecules each of H2A, H2B, H3 and H4 assembled in one H3-H4 heterotetramer and two H2A-H2B heterodimers. May be incorporated into a proportion of nucleosomes, replacing one or more H2A molecules. Present in mature sperm.

Its subcellular location is the nucleus. The protein localises to the chromosome. Functionally, atypical histone H2A which can replace conventional H2A in some nucleosomes and is associated with active transcription and mRNA processing. Nucleosomes wrap and compact DNA into chromatin, limiting DNA accessibility to the cellular machineries which require DNA as a template. Histones thereby play a central role in transcription regulation, DNA repair, DNA replication and chromosomal stability. Nucleosomes containing this histone are less rigid and organize less DNA than canonical nucleosomes in vivo. They are enriched in actively transcribed genes and associate with the elongating form of RNA polymerase. They associate with spliceosome components and are required for mRNA splicing. The chain is Histone H2A-Bbd type 1 from Homo sapiens (Human).